The primary structure comprises 733 residues: Hypermethylated in cancer 1 protein (733 aa).

The region spanning 47-110 (CDVIIVVQNA…IYTGRLADGA (64 aa)) is the BTB domain. The segment at 154 to 315 (KYCHLRGGGG…PFRGGSGSPG (162 aa)) is mediates HDAC-dependent transcriptional repression. Position 159 is an omega-N-methylarginine (Arg159). Residues 189-209 (YPSPVGPPPPPAAEPPSGPEA) form a disordered region. A compositionally biased stretch (pro residues) spans 192 to 206 (PVGPPPPPAAEPPSG). Ser237 is subject to Phosphoserine. The interaction with CTBP1 stretch occupies residues 241 to 247 (GLDLSKK). A disordered region spans residues 241-421 (GLDLSKKSPP…PGGHLEGYPC (181 aa)). Residue Ser248 is modified to Phosphoserine. A compositionally biased stretch (pro residues) spans 284–293 (LALPSLPPLP). N6-acetyllysine; alternate is present on Lys333. Lys333 is covalently cross-linked (Glycyl lysine isopeptide (Lys-Gly) (interchain with G-Cter in SUMO); alternate). Positions 344 to 361 (ELGRERGSPSERCEERGG) are enriched in basic and acidic residues. Ser366 carries the phosphoserine modification. The span at 368-380 (GGPPLGLAPPPRY) shows a compositional bias: pro residues. 5 consecutive C2H2-type zinc fingers follow at residues 439–459 (CIPC…VEAH), 509–529 (CASC…EKTH), 537–557 (CTIC…MRSH), 565–585 (CDAC…MRIH), and 593–613 (CQVC…MKMH). A Phosphoserine modification is found at Ser704.

Belongs to the krueppel C2H2-type zinc-finger protein family. Hic subfamily. As to quaternary structure, self-associates. Interacts with HIC2. Interacts with CTBP1 and CTBP2. Interacts with TCF7L2 and ARID1A. Interacts with MTA1 and MBD3; indicative for an association with the NuRD complex. Interacts with SIRT1. In terms of processing, acetylated on several residues, including Lys-333. Lys-333 is deacetylated by SIRT1. Post-translationally, sumoylated on Lys-333 by a PIAS family member, which enhances interaction with MTA1, positively regulates transcriptional repression activity and is enhanced by HDAC4. As to expression, ubiquitously expressed with highest levels found in lung, colon, prostate, thymus, testis and ovary. Expression is absent or decreased in many tumor cells.

Its subcellular location is the nucleus. Its function is as follows. Transcriptional repressor. Recognizes and binds to the consensus sequence '5-[CG]NG[CG]GGGCA[CA]CC-3'. May act as a tumor suppressor. Involved in development of head, face, limbs and ventral body wall. Involved in down-regulation of SIRT1 and thereby is involved in regulation of p53/TP53-dependent apoptotic DNA-damage responses. The specific target gene promoter association seems to be depend on corepressors, such as CTBP1 or CTBP2 and MTA1. In cooperation with MTA1 (indicative for an association with the NuRD complex) represses transcription from CCND1/cyclin-D1 and CDKN1C/p57Kip2 specifically in quiescent cells. Involved in regulation of the Wnt signaling pathway probably by association with TCF7L2 and preventing TCF7L2 and CTNNB1 association with promoters of TCF-responsive genes. Seems to repress transcription from E2F1 and ATOH1 which involves ARID1A, indicative for the participation of a distinct SWI/SNF-type chromatin-remodeling complex. Probably represses transcription of ACKR3, FGFBP1 and EFNA1. The chain is Hypermethylated in cancer 1 protein (HIC1) from Homo sapiens (Human).